Here is a 373-residue protein sequence, read N- to C-terminus: Forkhead box protein E1 (373 aa).

Residues 19 to 51 (KEERGETAAGAGVPGEATGRGAGGRRRKRPLQR) are disordered. Residues 41-50 (GGRRRKRPLQ) are compositionally biased toward basic residues. Positions 53 to 147 (KPPYSYIALI…ESGSFLRRRK (95 aa)) form a DNA-binding region, fork-head.

Post-translationally, phosphorylated. Detected in adult brain, placenta, lung, liver, skeletal muscle, kidney, pancreas, heart, colon, small intestine testis and thymus. Expression was strongest in heart and pancreas.

It localises to the nucleus. In terms of biological role, transcription factor that binds consensus sites on a variety of gene promoters and activate their transcription. Involved in proper palate formation, most probably through the expression of MSX1 and TGFB3 genes which are direct targets of this transcription factor. Also implicated in thyroid gland morphogenesis. May indirectly play a role in cell growth and migration through the regulation of WNT5A expression. This Homo sapiens (Human) protein is Forkhead box protein E1 (FOXE1).